We begin with the raw amino-acid sequence, 526 residues long: Bifunctional purine biosynthesis protein PurH (526 aa).

The 148-residue stretch at 1-148 folds into the MGS-like domain; that stretch reads MQRPIIIRRA…KNYSNVVVVV (148 aa).

The protein belongs to the PurH family.

It carries out the reaction (6R)-10-formyltetrahydrofolate + 5-amino-1-(5-phospho-beta-D-ribosyl)imidazole-4-carboxamide = 5-formamido-1-(5-phospho-D-ribosyl)imidazole-4-carboxamide + (6S)-5,6,7,8-tetrahydrofolate. It catalyses the reaction IMP + H2O = 5-formamido-1-(5-phospho-D-ribosyl)imidazole-4-carboxamide. It participates in purine metabolism; IMP biosynthesis via de novo pathway; 5-formamido-1-(5-phospho-D-ribosyl)imidazole-4-carboxamide from 5-amino-1-(5-phospho-D-ribosyl)imidazole-4-carboxamide (10-formyl THF route): step 1/1. It functions in the pathway purine metabolism; IMP biosynthesis via de novo pathway; IMP from 5-formamido-1-(5-phospho-D-ribosyl)imidazole-4-carboxamide: step 1/1. This chain is Bifunctional purine biosynthesis protein PurH, found in Baumannia cicadellinicola subsp. Homalodisca coagulata.